Reading from the N-terminus, the 485-residue chain is Glutamate mutase epsilon subunit (485 aa).

Arg66 lines the L-glutamate pocket. An adenosylcob(III)alamin-binding site is contributed by Gly68. Arg100 is an L-glutamate binding site. Asn123 lines the adenosylcob(III)alamin pocket. L-glutamate-binding positions include 149-150 (RH), Glu171, and Tyr177. Pro180 is an adenosylcob(III)alamin binding site. Tyr181 is an L-glutamate binding site. Residues Phe297, Lys326, Glu330, and Ile334 each coordinate adenosylcob(III)alamin.

Belongs to the methylaspartate mutase GlmE subunit family. Heterotetramer composed of 2 epsilon subunits (GlmE) and 2 sigma subunits (GlmS). GlmE exists as a homodimer and GlmS as a monomer. The cofactor is adenosylcob(III)alamin.

The enzyme catalyses (2S,3S)-3-methyl-L-aspartate = L-glutamate. It functions in the pathway amino-acid degradation; L-glutamate degradation via mesaconate pathway; acetate and pyruvate from L-glutamate: step 1/4. Its function is as follows. Catalyzes the carbon skeleton rearrangement of L-glutamate to L-threo-3-methylaspartate ((2S,3S)-3-methylaspartate). This chain is Glutamate mutase epsilon subunit, found in Treponema denticola (strain ATCC 35405 / DSM 14222 / CIP 103919 / JCM 8153 / KCTC 15104).